Consider the following 330-residue polypeptide: Beta-hexosaminidase (330 aa).

Substrate-binding positions include D62, R70, R130, and 160–161 (KH). H173 functions as the Proton donor/acceptor in the catalytic mechanism. The active-site Nucleophile is D242.

It belongs to the glycosyl hydrolase 3 family. NagZ subfamily. As to quaternary structure, monomer.

It is found in the cytoplasm. The enzyme catalyses Hydrolysis of terminal non-reducing N-acetyl-D-hexosamine residues in N-acetyl-beta-D-hexosaminides.. It functions in the pathway cell wall biogenesis; peptidoglycan recycling. Plays a role in peptidoglycan recycling by cleaving the terminal beta-1,4-linked N-acetylglucosamine (GlcNAc) from peptide-linked peptidoglycan fragments, giving rise to free GlcNAc, anhydro-N-acetylmuramic acid and anhydro-N-acetylmuramic acid-linked peptides. Plays a role in beta-lactam antibiotic resistance via its role in generating anhydro-N-acetylmuramic acid-linked peptides; these peptides function as signaling molecules that induce high-level expression of the beta-lactamase AmpC. The sequence is that of Beta-hexosaminidase from Vibrio cholerae serotype O1 (strain ATCC 39315 / El Tor Inaba N16961).